Consider the following 221-residue polypeptide: 7-cyano-7-deazaguanine synthase (221 aa).

9 to 19 (YSGGMDSFTLL) is an ATP binding site. The Zn(2+) site is built by Cys185, Cys193, Cys196, and Cys199.

This sequence belongs to the QueC family. Requires Zn(2+) as cofactor.

It catalyses the reaction 7-carboxy-7-deazaguanine + NH4(+) + ATP = 7-cyano-7-deazaguanine + ADP + phosphate + H2O + H(+). Its pathway is purine metabolism; 7-cyano-7-deazaguanine biosynthesis. Catalyzes the ATP-dependent conversion of 7-carboxy-7-deazaguanine (CDG) to 7-cyano-7-deazaguanine (preQ(0)). The sequence is that of 7-cyano-7-deazaguanine synthase from Marinobacter nauticus (strain ATCC 700491 / DSM 11845 / VT8) (Marinobacter aquaeolei).